Consider the following 205-residue polypeptide: Large ribosomal subunit protein uL4 (205 aa).

The interval 48-79 is disordered; that stretch reads KAQKSRSDVSGGGKKPWKQKGSGHARAGTTRS.

This sequence belongs to the universal ribosomal protein uL4 family. In terms of assembly, part of the 50S ribosomal subunit.

In terms of biological role, one of the primary rRNA binding proteins, this protein initially binds near the 5'-end of the 23S rRNA. It is important during the early stages of 50S assembly. It makes multiple contacts with different domains of the 23S rRNA in the assembled 50S subunit and ribosome. Its function is as follows. Forms part of the polypeptide exit tunnel. In Methylococcus capsulatus (strain ATCC 33009 / NCIMB 11132 / Bath), this protein is Large ribosomal subunit protein uL4.